We begin with the raw amino-acid sequence, 573 residues long: DNA ligase (573 aa).

E248 is an ATP binding site. Catalysis depends on K250, which acts as the N6-AMP-lysine intermediate. Positions 255, 270, 299, 340, 432, and 438 each coordinate ATP.

It belongs to the ATP-dependent DNA ligase family. Requires Mg(2+) as cofactor.

It catalyses the reaction ATP + (deoxyribonucleotide)n-3'-hydroxyl + 5'-phospho-(deoxyribonucleotide)m = (deoxyribonucleotide)n+m + AMP + diphosphate.. DNA ligase that seals nicks in double-stranded DNA during DNA replication, DNA recombination and DNA repair. The polypeptide is DNA ligase (Methanocaldococcus jannaschii (strain ATCC 43067 / DSM 2661 / JAL-1 / JCM 10045 / NBRC 100440) (Methanococcus jannaschii)).